The primary structure comprises 366 residues: Dihydroorotate dehydrogenase (quinone) (366 aa).

FMN is bound by residues 74–78 and Thr98; that span reads AGFDK. Lys78 provides a ligand contact to substrate. Substrate is bound at residue 123–127; it reads NRMGF. Asn156 and Asn189 together coordinate FMN. Asn189 contributes to the substrate binding site. Ser192 functions as the Nucleophile in the catalytic mechanism. Residue Asn194 coordinates substrate. Residues Lys231 and Thr259 each coordinate FMN. Residue 260 to 261 participates in substrate binding; the sequence is NT. Residues Gly285, Gly314, and 335 to 336 each bind FMN; that span reads YT.

Belongs to the dihydroorotate dehydrogenase family. Type 2 subfamily. Monomer. The cofactor is FMN.

The protein localises to the cell membrane. It catalyses the reaction (S)-dihydroorotate + a quinone = orotate + a quinol. It participates in pyrimidine metabolism; UMP biosynthesis via de novo pathway; orotate from (S)-dihydroorotate (quinone route): step 1/1. In terms of biological role, catalyzes the conversion of dihydroorotate to orotate with quinone as electron acceptor. The polypeptide is Dihydroorotate dehydrogenase (quinone) (Kineococcus radiotolerans (strain ATCC BAA-149 / DSM 14245 / SRS30216)).